The sequence spans 194 residues: Type II secretion system protein H (194 aa).

The propeptide at 1–6 (MTATRG) is leader sequence. Phe7 is subject to N-methylphenylalanine. The chain crosses the membrane as a helical span at residues 12–32 (ILLVLVLVSASAVAVIATFPV).

It belongs to the GSP H family. As to quaternary structure, type II secretion is composed of four main components: the outer membrane complex, the inner membrane complex, the cytoplasmic secretion ATPase and the periplasm-spanning pseudopilus. Interacts with core component EpsG. In terms of processing, cleaved by prepilin peptidase. Post-translationally, methylated by prepilin peptidase at the amino group of the N-terminal phenylalanine once the leader sequence is cleaved by prepilin peptidase.

The protein resides in the cell inner membrane. Component of the type II secretion system required for the energy-dependent secretion of extracellular factors such as proteases and toxins from the periplasm. Part of the pseudopilus tip complex that is critical for the recognition and binding of secretion substrates. This Vibrio cholerae serotype O1 (strain ATCC 39315 / El Tor Inaba N16961) protein is Type II secretion system protein H (epsH).